A 228-amino-acid chain; its full sequence is Leucine rich adaptor protein 1-like (228 aa).

Position 1 is an N-acetylmethionine (Met-1). Residues 1–89 (MEDSPLPDLR…GSPRGSHSSA (89 aa)) form a disordered region. Basic and acidic residues-rich tracts occupy residues 8–21 (DLRD…RKVP) and 28–42 (LRGE…DRDP). Gly residues predominate over residues 44–56 (GGSGGGGGGGGGC). The span at 57–88 (SSSSSYCSFPPSLSSSSSSSPTSGSPRGSHSS) shows a compositional bias: low complexity.

In Homo sapiens (Human), this protein is Leucine rich adaptor protein 1-like (LURAP1L).